The sequence spans 89 residues: Large ribosomal subunit protein bL28 (89 aa).

This sequence belongs to the bacterial ribosomal protein bL28 family.

The protein is Large ribosomal subunit protein bL28 of Chlamydia muridarum (strain MoPn / Nigg).